We begin with the raw amino-acid sequence, 155 residues long: Protein-export protein SecB (155 aa).

The protein belongs to the SecB family. In terms of assembly, homotetramer, a dimer of dimers. One homotetramer interacts with 1 SecA dimer.

Its subcellular location is the cytoplasm. Its function is as follows. One of the proteins required for the normal export of preproteins out of the cell cytoplasm. It is a molecular chaperone that binds to a subset of precursor proteins, maintaining them in a translocation-competent state. It also specifically binds to its receptor SecA. This Vibrio vulnificus (strain CMCP6) protein is Protein-export protein SecB.